Reading from the N-terminus, the 481-residue chain is Cysteine--tRNA ligase (481 aa).

C27 contacts Zn(2+). The short motif at 29-39 (PTVYNYAHIGN) is the 'HIGH' region element. 3 residues coordinate Zn(2+): C222, H247, and E251. The 'KMSKS' region motif lies at 279–283 (KMSKS). K282 lines the ATP pocket.

It belongs to the class-I aminoacyl-tRNA synthetase family. In terms of assembly, monomer. Zn(2+) serves as cofactor.

It is found in the cytoplasm. The catalysed reaction is tRNA(Cys) + L-cysteine + ATP = L-cysteinyl-tRNA(Cys) + AMP + diphosphate. This is Cysteine--tRNA ligase from Borrelia turicatae (strain 91E135).